The sequence spans 364 residues: MAAASTSSPVISQPQFTAMNEQQCFYNESIAFFYNRSGKYLATEWNTVSKLVMGLGITVCVFIMLANLLVMVAIYVNRRFHFPIYYLMANLAAADFFAGLAYFYLMFNTGPNTRRLTVSTWLLRQGLIDTSLTASVANLLAIAIERHITVFRMQLHTRMSNRRVVVVIVVIWTMAIVMGAIPSVGWNCICDIDHCSNMAPLYSDSYLVFWAIFNLVTFVVMVVLYAHIFGYVRQRTMRMSRHSSGPRRNRDTMMSLLKTVVIVLGAFIVCWTPGLVLLLLDVCCPQCDVLAYEKFFLLLAEFNSAMNPIIYSYRDKEMSATFRQILCCQRNENPNGPTEGSDRSASSLNHTILAGVHSNDHSVV.

Topologically, residues 1–50 are extracellular; that stretch reads MAAASTSSPVISQPQFTAMNEQQCFYNESIAFFYNRSGKYLATEWNTVSK. 2 cysteine pairs are disulfide-bonded: Cys24/Cys190 and Cys188/Cys195. N-linked (GlcNAc...) asparagine glycosylation is found at Asn27 and Asn35. Position 39 (Lys39) interacts with a 1-acyl-sn-glycero-3-phosphate. A helical membrane pass occupies residues 51-75; the sequence is LVMGLGITVCVFIMLANLLVMVAIY. The Cytoplasmic segment spans residues 76 to 83; sequence VNRRFHFP. Residues 84–107 form a helical membrane-spanning segment; that stretch reads IYYLMANLAAADFFAGLAYFYLMF. Over 108-121 the chain is Extracellular; sequence NTGPNTRRLTVSTW. Residues 122–144 form a helical membrane-spanning segment; that stretch reads LLRQGLIDTSLTASVANLLAIAI. 124 to 129 serves as a coordination point for a 1-acyl-sn-glycero-3-phosphate; sequence RQGLID. Residues 145-163 lie on the Cytoplasmic side of the membrane; that stretch reads ERHITVFRMQLHTRMSNRR. Residues 164-184 traverse the membrane as a helical segment; sequence VVVVIVVIWTMAIVMGAIPSV. Topologically, residues 185–204 are extracellular; it reads GWNCICDIDHCSNMAPLYSD. A helical membrane pass occupies residues 205-225; sequence SYLVFWAIFNLVTFVVMVVLY. Trp210 contributes to the a 1-acyl-sn-glycero-3-phosphate binding site. The Cytoplasmic portion of the chain corresponds to 226 to 255; that stretch reads AHIFGYVRQRTMRMSRHSSGPRRNRDTMMS. The helical transmembrane segment at 256–280 threads the bilayer; it reads LLKTVVIVLGAFIVCWTPGLVLLLL. Topologically, residues 281–294 are extracellular; that stretch reads DVCCPQCDVLAYEK. A disulfide bridge links Cys284 with Cys287. Residues 295-315 form a helical membrane-spanning segment; it reads FFLLLAEFNSAMNPIIYSYRD. Residues 316 to 364 are Cytoplasmic-facing; that stretch reads KEMSATFRQILCCQRNENPNGPTEGSDRSASSLNHTILAGVHSNDHSVV. Ser341 carries the phosphoserine modification. Residue Thr351 is modified to Phosphothreonine.

Belongs to the G-protein coupled receptor 1 family. In terms of assembly, interacts with RALA and GRK2. Interacts with GNAQ and GNA13. Interacts with CD14; the interaction is enhanced by exposure to bacterial lipopolysaccharide (LPS). N-glycosylated. Detected in lung. Detected in oligodendrocytes in corpus callosum in brain cortex (at protein level). Expressed within the embryonic cerebral cortex, where it is enriched in the ventricular zone. In the adult brain, also expressed in oligodendrocytes, as well as Schwann cells of the peripheral nervous system. Expressed in many other tissues, including lung, heart, intestine, spleen, thymus, and stomach. No expression in liver. Detected in kidney and testis. Detected in embryonic fibroblasts. Detected in adult lung fibroblasts and lung endothelial cells. Detected in dorsal root ganglion and dorsal root. Detected in astrocytes. Detected in bone.

The protein localises to the cell surface. It localises to the cell membrane. The protein resides in the endosome. Receptor for lysophosphatidic acid (LPA). Plays a role in the reorganization of the actin cytoskeleton, cell migration, differentiation and proliferation, and thereby contributes to the responses to tissue damage and infectious agents. Activates downstream signaling cascades via the G(i)/G(o), G(12)/G(13), and G(q) families of heteromeric G proteins. Signaling inhibits adenylyl cyclase activity and decreases cellular cAMP levels. Signaling triggers an increase of cytoplasmic Ca(2+) levels. Activates RALA; this leads to the activation of phospholipase C (PLC) and the formation of inositol 1,4,5-trisphosphate. Signaling mediates activation of down-stream MAP kinases. Contributes to the regulation of cell shape. Promotes Rho-dependent reorganization of the actin cytoskeleton in neuronal cells and neurite retraction. Promotes the activation of Rho and the formation of actin stress fibers. Promotes formation of lamellipodia at the leading edge of migrating cells via activation of RAC1. Through its function as LPA receptor, plays a role in chemotaxis and cell migration, including responses to injury and wounding. Plays a role in triggering inflammation in response to bacterial lipopolysaccharide (LPS) via its interaction with CD14. Promotes cell proliferation in response to LPA. Inhibits the intracellular ciliogenesis pathway in response to LPA and through AKT1 activation. Required for normal skeleton development. May play a role in osteoblast differentiation. Required for normal brain development. Required for normal proliferation, survival and maturation of newly formed neurons in the adult dentate gyrus. Plays a role in pain perception and in the initiation of neuropathic pain. This chain is Lysophosphatidic acid receptor 1 (Lpar1), found in Mus musculus (Mouse).